A 354-amino-acid polypeptide reads, in one-letter code: tRNA N6-adenosine threonylcarbamoyltransferase (354 aa).

Residues His-115 and His-119 each coordinate Fe cation. Substrate is bound by residues 138-142 (LVSGG), Asp-171, Gly-184, and Asn-276. Residue Asp-304 participates in Fe cation binding.

Belongs to the KAE1 / TsaD family. Requires Fe(2+) as cofactor.

It localises to the cytoplasm. The enzyme catalyses L-threonylcarbamoyladenylate + adenosine(37) in tRNA = N(6)-L-threonylcarbamoyladenosine(37) in tRNA + AMP + H(+). Functionally, required for the formation of a threonylcarbamoyl group on adenosine at position 37 (t(6)A37) in tRNAs that read codons beginning with adenine. Is involved in the transfer of the threonylcarbamoyl moiety of threonylcarbamoyl-AMP (TC-AMP) to the N6 group of A37, together with TsaE and TsaB. TsaD likely plays a direct catalytic role in this reaction. The protein is tRNA N6-adenosine threonylcarbamoyltransferase of Xanthomonas oryzae pv. oryzae (strain MAFF 311018).